Consider the following 69-residue polypeptide: Protein translocase subunit SecE (69 aa).

A helical transmembrane segment spans residues 43 to 63; that stretch reads GLGICLLGFVGFVIHVPITYL.

This sequence belongs to the SecE/SEC61-gamma family. As to quaternary structure, component of the Sec protein translocase complex. Heterotrimer consisting of SecY (alpha), SecG (beta) and SecE (gamma) subunits. The heterotrimers can form oligomers, although 1 heterotrimer is thought to be able to translocate proteins. Interacts with the ribosome. May interact with SecDF, and other proteins may be involved.

The protein localises to the cell membrane. Its function is as follows. Essential subunit of the Sec protein translocation channel SecYEG. Clamps together the 2 halves of SecY. May contact the channel plug during translocation. The chain is Protein translocase subunit SecE from Methanococcus maripaludis (strain DSM 14266 / JCM 13030 / NBRC 101832 / S2 / LL).